We begin with the raw amino-acid sequence, 100 residues long: NADH-quinone oxidoreductase subunit K (100 aa).

The next 3 membrane-spanning stretches (helical) occupy residues Pro-3–Leu-23, Ile-29–Phe-49, and Phe-63–Ile-83.

The protein belongs to the complex I subunit 4L family. NDH-1 is composed of 15 different subunits. Subunits NuoA, H, J, K, L, M, N constitute the membrane sector of the complex.

It is found in the cell membrane. The enzyme catalyses a quinone + NADH + 5 H(+)(in) = a quinol + NAD(+) + 4 H(+)(out). Functionally, NDH-1 shuttles electrons from NADH, via FMN and iron-sulfur (Fe-S) centers, to quinones in the respiratory chain. The immediate electron acceptor for the enzyme in this species is believed to be a menaquinone. Couples the redox reaction to proton translocation (for every two electrons transferred, four hydrogen ions are translocated across the cytoplasmic membrane), and thus conserves the redox energy in a proton gradient. The sequence is that of NADH-quinone oxidoreductase subunit K from Deinococcus geothermalis (strain DSM 11300 / CIP 105573 / AG-3a).